The chain runs to 120 residues: NAD(P)H-quinone oxidoreductase subunit 3, chloroplastic (120 aa).

Transmembrane regions (helical) follow at residues 9 to 29 (IFWA…FISG), 64 to 84 (MFAL…PWAM), and 88 to 108 (VLGV…IVGL).

Belongs to the complex I subunit 3 family. In terms of assembly, NDH is composed of at least 16 different subunits, 5 of which are encoded in the nucleus.

The protein localises to the plastid. It is found in the chloroplast thylakoid membrane. It carries out the reaction a plastoquinone + NADH + (n+1) H(+)(in) = a plastoquinol + NAD(+) + n H(+)(out). It catalyses the reaction a plastoquinone + NADPH + (n+1) H(+)(in) = a plastoquinol + NADP(+) + n H(+)(out). In terms of biological role, NDH shuttles electrons from NAD(P)H:plastoquinone, via FMN and iron-sulfur (Fe-S) centers, to quinones in the photosynthetic chain and possibly in a chloroplast respiratory chain. The immediate electron acceptor for the enzyme in this species is believed to be plastoquinone. Couples the redox reaction to proton translocation, and thus conserves the redox energy in a proton gradient. The chain is NAD(P)H-quinone oxidoreductase subunit 3, chloroplastic from Lactuca sativa (Garden lettuce).